The chain runs to 459 residues: ATP synthase subunit beta (459 aa).

G148–T155 serves as a coordination point for ATP.

Belongs to the ATPase alpha/beta chains family. F-type ATPases have 2 components, CF(1) - the catalytic core - and CF(0) - the membrane proton channel. CF(1) has five subunits: alpha(3), beta(3), gamma(1), delta(1), epsilon(1). CF(0) has three main subunits: a(1), b(2) and c(9-12). The alpha and beta chains form an alternating ring which encloses part of the gamma chain. CF(1) is attached to CF(0) by a central stalk formed by the gamma and epsilon chains, while a peripheral stalk is formed by the delta and b chains.

Its subcellular location is the cell inner membrane. The catalysed reaction is ATP + H2O + 4 H(+)(in) = ADP + phosphate + 5 H(+)(out). Produces ATP from ADP in the presence of a proton gradient across the membrane. The catalytic sites are hosted primarily by the beta subunits. The protein is ATP synthase subunit beta of Hahella chejuensis (strain KCTC 2396).